Reading from the N-terminus, the 63-residue chain is DNA-directed RNA polymerase 7 kDa subunit (63 aa).

The protein belongs to the poxviridae DNA-directed RNA polymerase 7 kDa subunit family. In terms of assembly, the DNA-dependent RNA polymerase (vRNAP) consists of eight subunits encoded by early viral genes and termed according to their apparent molecular masses Rpo147, Rpo132, Rpo35, Rpo30, Rpo22, Rpo19, Rpo18, and Rpo7. The same holoenzyme, with the addition of the transcription-specificity factor RAP94, is used for early gene expression.

It is found in the virion. It carries out the reaction RNA(n) + a ribonucleoside 5'-triphosphate = RNA(n+1) + diphosphate. Functionally, part of the DNA-dependent RNA polymerase which catalyzes the transcription of viral DNA into RNA using the four ribonucleoside triphosphates as substrates. Responsible for the transcription of early, intermediate and late genes. DNA-dependent RNA polymerase associates with the early transcription factor (ETF), itself composed of OPG118 and OPG134, thereby allowing the early genes transcription. Late transcription, and probably also intermediate transcription, require newly synthesized RNA polymerase. The sequence is that of DNA-directed RNA polymerase 7 kDa subunit (OPG090) from Monkeypox virus.